Here is a 433-residue protein sequence, read N- to C-terminus: Evolutionarily conserved signaling intermediate in Toll pathway, mitochondrial (433 aa).

Residues 1 to 48 constitute a mitochondrion transit peptide; it reads MSWAQAILLARGASRGWGGICSTALTGAPFSQVPPQAPRGLRCSAAAH. The disordered stretch occupies residues 36–63; that stretch reads QAPRGLRCSAAAHNPDSSLVPHPPEPPR. K372 is covalently cross-linked (Glycyl lysine isopeptide (Lys-Gly) (interchain with G-Cter in ubiquitin)). Positions 397-433 are disordered; it reads SGELLPSSSELEEPPPPPPEGQEEEEDSQQRQQQGQS.

This sequence belongs to the ECSIT family. Interacts with MAP3K1, SMAD4 and TRAF6. Interacts with SMAD1 only after BMP4-treatment. Part of the mitochondrial complex I assembly/MCIA complex that comprises at least the core subunits TMEM126B, NDUFAF1, ECSIT and ACAD9 and complement subunits such as COA1 and TMEM186. Interacts with NDUFAF1. Interacts with ACAD9. Interacts with TRIM59. Interacts with TMEM70 and TMEM242. Interacts (when ubiquitinated) with NF-kappa-B subunits RELA and NFKB1. Interacts with RIGI, IFIT1 and MAVS; these interactions promote RLR-mediated type I IFN induction. Interacts with SQSTM1; this interaction inhibits TLR4 signaling via functional regulation of the TRAF6-ECSIT complex. Interacts with cereblon/CRBN; this interaction inhibits the ubiquitination of ECSIT. Post-translationally, ubiquitinated on Lys-372; leading to translocation in the nucleus together with RELA and NFKB1 and expression of NF-kappa-B-dependent genes.

Its subcellular location is the cytoplasm. It localises to the nucleus. The protein resides in the mitochondrion. In terms of biological role, adapter protein that plays a role in different signaling pathways including TLRs and IL-1 pathways or innate antiviral induction signaling. Plays a role in the activation of NF-kappa-B by forming a signal complex with TRAF6 and TAK1/MAP3K7 to activate TAK1/MAP3K7 leading to activation of IKKs. Once ubiquitinated, interacts with the dissociated RELA and NFKB1 proteins and translocates to the nucleus where it induces NF-kappa-B-dependent gene expression. Plays a role in innate antiviral immune response by bridging the pattern recognition receptors RIGI and MDA5/IFIT1 to the MAVS complex at the mitochondrion. Promotes proteolytic activation of MAP3K1. Involved in the BMP signaling pathway. Required for normal embryonic development. Functionally, as part of the MCIA complex, involved in the assembly of the mitochondrial complex I. This Bos taurus (Bovine) protein is Evolutionarily conserved signaling intermediate in Toll pathway, mitochondrial.